The primary structure comprises 189 residues: UPF0301 protein PFLU_5755 (189 aa).

It belongs to the UPF0301 (AlgH) family.

The protein is UPF0301 protein PFLU_5755 of Pseudomonas fluorescens (strain SBW25).